The chain runs to 256 residues: Ubiquinone/menaquinone biosynthesis C-methyltransferase UbiE (256 aa).

S-adenosyl-L-methionine-binding positions include T79, D100, and 128-129 (DA).

Belongs to the class I-like SAM-binding methyltransferase superfamily. MenG/UbiE family.

The enzyme catalyses a 2-demethylmenaquinol + S-adenosyl-L-methionine = a menaquinol + S-adenosyl-L-homocysteine + H(+). It catalyses the reaction a 2-methoxy-6-(all-trans-polyprenyl)benzene-1,4-diol + S-adenosyl-L-methionine = a 5-methoxy-2-methyl-3-(all-trans-polyprenyl)benzene-1,4-diol + S-adenosyl-L-homocysteine + H(+). It participates in quinol/quinone metabolism; menaquinone biosynthesis; menaquinol from 1,4-dihydroxy-2-naphthoate: step 2/2. Its pathway is cofactor biosynthesis; ubiquinone biosynthesis. Methyltransferase required for the conversion of demethylmenaquinol (DMKH2) to menaquinol (MKH2) and the conversion of 2-polyprenyl-6-methoxy-1,4-benzoquinol (DDMQH2) to 2-polyprenyl-3-methyl-6-methoxy-1,4-benzoquinol (DMQH2). The sequence is that of Ubiquinone/menaquinone biosynthesis C-methyltransferase UbiE from Pseudomonas fluorescens (strain SBW25).